The following is a 539-amino-acid chain: Putative cysteine ligase BshC (539 aa).

A coiled-coil region spans residues 249 to 270 (VETNDEVTNRLNESQAAMKRAG).

It belongs to the BshC family.

Functionally, involved in bacillithiol (BSH) biosynthesis. May catalyze the last step of the pathway, the addition of cysteine to glucosamine malate (GlcN-Mal) to generate BSH. This is Putative cysteine ligase BshC from Bacillus pumilus (strain SAFR-032).